A 453-amino-acid chain; its full sequence is uncharacterized protein (453 aa).

A TRAM domain is found at 5-63; that stretch reads LLKKNQSIELTIEDLTHDGSGVGKIDGYPLFIPNTLPGEKVTAKIIKLNKNYGFARMEN. [4Fe-4S] cluster-binding residues include cysteine 76, cysteine 82, cysteine 85, and cysteine 162. Glutamine 285, tyrosine 314, glutamate 335, and aspartate 383 together coordinate S-adenosyl-L-methionine. Cysteine 410 (nucleophile) is an active-site residue.

It belongs to the class I-like SAM-binding methyltransferase superfamily. RNA M5U methyltransferase family.

This is an uncharacterized protein from Listeria monocytogenes serotype 4b (strain F2365).